The following is an 848-amino-acid chain: Coiled-coil and C2 domain-containing protein 1B (848 aa).

Residues 1 to 10 show a composition bias toward basic residues; sequence MPGPRPRKGP. Disordered stretches follow at residues 1 to 21 and 53 to 75; these read MPGPRPRKGPKTSGQGAETAK and ALTGETASRSRKPAPKGQAPLPM. Residues 165 to 193 are a coiled coil; it reads LQALLEERIRNYREAAASAKEAGEAAKAR. Disordered stretches follow at residues 217–276, 326–353, 433–460, and 476–523; these read EDEI…DPDP, VDLSGMPPAPADLKALPQASKASSATQG, DFAELPVPPGFPPIPGLEPRKGSEQDSV, and ALVD…SPSV. The segment covering 438 to 448 has biased composition (pro residues); that stretch reads PVPPGFPPIPG. Phosphoserine is present on Ser455. The segment covering 476–485 has biased composition (acidic residues); sequence ALVDDDEESD. Composition is skewed to low complexity over residues 487–498 and 509–522; these read PAQAPLAKKPAQ and EPKASSSKESLSPS. At Ser583 the chain carries Phosphoserine. Thr586 carries the post-translational modification Phosphothreonine. A coiled-coil region spans residues 600–626; that stretch reads LRLSQKAEEVYAQLQKMLQEQQAKCLL. A C2 domain is found at 666 to 805; the sequence is DPPSHHFELK…EKECEIREIM (140 aa).

This sequence belongs to the CC2D1 family. As to quaternary structure, interacts with CHMP4B.

It is found in the nucleus. Functionally, transcription factor that binds specifically to the DRE (dual repressor element) and represses HTR1A gene transcription in neuronal cells. This is Coiled-coil and C2 domain-containing protein 1B (Cc2d1b) from Mus musculus (Mouse).